The primary structure comprises 51 residues: Ovomucoid (51 aa).

The Kazal-like domain maps to 3-51; it reads VDCSGYPKPACTLEYFPLCGSDNQTYANKCTFCNAVVEKNVTLNHLGEC. Disulfide bonds link Cys-5-Cys-35, Cys-13-Cys-32, and Cys-21-Cys-51. Asn-42 carries N-linked (GlcNAc...) asparagine glycosylation.

It is found in the secreted. The protein is Ovomucoid of Nothoprocta perdicaria (Chilean tinamou).